The primary structure comprises 124 residues: Small ribosomal subunit protein uS12 (124 aa).

Residues 1-20 (MATISQLVRNPRKDKVQKTS) form a disordered region. D89 bears the 3-methylthioaspartic acid mark. The segment at 104 to 124 (TSGVTARRKGRSKYGAKRPKA) is disordered. The span at 109–124 (ARRKGRSKYGAKRPKA) shows a compositional bias: basic residues.

Belongs to the universal ribosomal protein uS12 family. Part of the 30S ribosomal subunit. Contacts proteins S8 and S17. May interact with IF1 in the 30S initiation complex.

Its function is as follows. With S4 and S5 plays an important role in translational accuracy. Functionally, interacts with and stabilizes bases of the 16S rRNA that are involved in tRNA selection in the A site and with the mRNA backbone. Located at the interface of the 30S and 50S subunits, it traverses the body of the 30S subunit contacting proteins on the other side and probably holding the rRNA structure together. The combined cluster of proteins S8, S12 and S17 appears to hold together the shoulder and platform of the 30S subunit. In Psychromonas ingrahamii (strain DSM 17664 / CCUG 51855 / 37), this protein is Small ribosomal subunit protein uS12.